Consider the following 318-residue polypeptide: Aspartate carbamoyltransferase catalytic subunit (318 aa).

Residues R59 and T60 each coordinate carbamoyl phosphate. K87 is an L-aspartate binding site. 3 residues coordinate carbamoyl phosphate: R109, H137, and Q140. Residues R170 and R224 each coordinate L-aspartate. G265 and P266 together coordinate carbamoyl phosphate.

It belongs to the aspartate/ornithine carbamoyltransferase superfamily. ATCase family. In terms of assembly, heterododecamer (2C3:3R2) of six catalytic PyrB chains organized as two trimers (C3), and six regulatory PyrI chains organized as three dimers (R2).

The enzyme catalyses carbamoyl phosphate + L-aspartate = N-carbamoyl-L-aspartate + phosphate + H(+). It participates in pyrimidine metabolism; UMP biosynthesis via de novo pathway; (S)-dihydroorotate from bicarbonate: step 2/3. Its function is as follows. Catalyzes the condensation of carbamoyl phosphate and aspartate to form carbamoyl aspartate and inorganic phosphate, the committed step in the de novo pyrimidine nucleotide biosynthesis pathway. The sequence is that of Aspartate carbamoyltransferase catalytic subunit from Rhizobium johnstonii (strain DSM 114642 / LMG 32736 / 3841) (Rhizobium leguminosarum bv. viciae).